The chain runs to 196 residues: MPGMFFSANPKDLKGTDQSLLDDKTQKRRPKTFGMDVKAYLRSMIPHLESGMKSSKSKDILSADEVMQWSQSLEKLLANQTGQDVFGNFLKSEFSEENIEFWLACEDYKKTESDLLRCKAEKIYKAFVHSDAAKQINIDFHTRESTAKKIKAPTLTCFDEAQKVIYTLMEKDSYPRFLKSNIYLNLLNDLQANSLK.

Residues 1–27 form a disordered region; sequence MPGMFFSANPKDLKGTDQSLLDDKTQK. The span at 11-25 shows a compositional bias: basic and acidic residues; that stretch reads KDLKGTDQSLLDDKT. In terms of domain architecture, RGS spans 72-187; the sequence is SLEKLLANQT…LKSNIYLNLL (116 aa).

Interacts with GNAI1 and GNAQ.

Its subcellular location is the cell membrane. The protein localises to the cytoplasm. It is found in the cytosol. In terms of biological role, regulates G protein-coupled receptor signaling cascades, including signaling downstream of the N-formylpeptide chemoattractant receptors and leukotriene receptors. Inhibits B cell chemotaxis toward CXCL12. Inhibits signal transduction by increasing the GTPase activity of G protein alpha subunits, thereby driving them into their inactive GDP-bound form. This Equus caballus (Horse) protein is Regulator of G-protein signaling 1 (RGS1).